We begin with the raw amino-acid sequence, 196 residues long: dCTP deaminase, dUMP-forming (196 aa).

DCTP-binding positions include 101 to 106 (KSSLGR), Asp-119, 127 to 129 (TLE), Gln-148, Tyr-162, and Gln-174. Glu-129 (proton donor/acceptor) is an active-site residue.

This sequence belongs to the dCTP deaminase family. As to quaternary structure, homotrimer.

The catalysed reaction is dCTP + 2 H2O = dUMP + NH4(+) + diphosphate. It functions in the pathway pyrimidine metabolism; dUMP biosynthesis; dUMP from dCTP: step 1/1. Bifunctional enzyme that catalyzes both the deamination of dCTP to dUTP and the hydrolysis of dUTP to dUMP without releasing the toxic dUTP intermediate. This Thermobifida fusca (strain YX) protein is dCTP deaminase, dUMP-forming.